Here is a 79-residue protein sequence, read N- to C-terminus: Sulfur carrier protein TusA (79 aa).

Cys16 (cysteine persulfide intermediate) is an active-site residue.

It belongs to the sulfur carrier protein TusA family.

It is found in the cytoplasm. Its function is as follows. Sulfur carrier protein which probably makes part of a sulfur-relay system. The chain is Sulfur carrier protein TusA from Pseudomonas aeruginosa (strain LESB58).